We begin with the raw amino-acid sequence, 197 residues long: Short chain dehydrogenase ausX (197 aa).

The NADP(+) site is built by Ile-49, Asp-95, Arg-157, and Tyr-189. Tyr-189 acts as the Proton acceptor in catalysis. Catalysis depends on Tyr-189, which acts as the Proton donor.

This sequence belongs to the short-chain dehydrogenases/reductases (SDR) family.

The protein operates within secondary metabolite biosynthesis; terpenoid biosynthesis. Its function is as follows. Short chain dehydrogenase; part of the gene cluster A that mediates the biosynthesis of austinol and dehydroaustinol, two fungal meroterpenoids. The first step of the pathway is the synthesis of 3,5-dimethylorsellinic acid by the polyketide synthase ausA. 3,5-dimethylorsellinic acid is then prenylated by the polyprenyl transferase ausN. Further epoxidation by the FAD-dependent monooxygenase ausM and cyclization by the probable terpene cyclase ausL lead to the formation of protoaustinoid A. Protoaustinoid A is then oxidized to spiro-lactone preaustinoid A3 by the combined action of the FAD-binding monooxygenases ausB and ausC, and the dioxygenase ausE. Acid-catalyzed keto-rearrangement and ring contraction of the tetraketide portion of preaustinoid A3 by ausJ lead to the formation of preaustinoid A4. The aldo-keto reductase ausK, with the help of ausH, is involved in the next step by transforming preaustinoid A4 into isoaustinone which is in turn hydroxylated by the P450 monooxygenase ausI to form austinolide. Finally, the cytochrome P450 monooxygenase ausG modifies austinolide to austinol. Austinol can be further modified to dehydroaustinol which forms a diffusible complex with diorcinol that initiates conidiation. Due to genetic rearrangements of the clusters and the subsequent loss of some enzymes, the end products of the Emericella nidulans austinoid biosynthesis clusters are austinol and dehydroaustinol, even if additional enzymes, such as the O-acetyltransferase ausQ and the cytochrome P450 monooxygenase ausR are still functional. This Emericella nidulans (strain FGSC A4 / ATCC 38163 / CBS 112.46 / NRRL 194 / M139) (Aspergillus nidulans) protein is Short chain dehydrogenase ausX.